A 237-amino-acid chain; its full sequence is Ribosomal RNA small subunit methyltransferase G (237 aa).

S-adenosyl-L-methionine-binding positions include Gly-79, 130 to 131 (CE), and Arg-147.

This sequence belongs to the methyltransferase superfamily. RNA methyltransferase RsmG family.

The protein resides in the cytoplasm. In terms of biological role, specifically methylates the N7 position of a guanine in 16S rRNA. The protein is Ribosomal RNA small subunit methyltransferase G of Malacoplasma penetrans (strain HF-2) (Mycoplasma penetrans).